Consider the following 395-residue polypeptide: Probable G-protein coupled receptor npr-29 (395 aa).

4 helical membrane-spanning segments follow: residues 38–58, 66–86, 89–109, and 148–168; these read VVGF…LFAP, ILFY…AMLL, IELV…YLIF, and AIIQ…PVFA. Asparagine 180 carries N-linked (GlcNAc...) asparagine glycosylation. 3 consecutive transmembrane segments (helical) span residues 202–222, 252–272, and 287–307; these read FWFN…GIIY, VITT…PYWV, and IIII…AYPL.

The protein belongs to the G-protein coupled receptor 1 family.

It is found in the cell membrane. In terms of biological role, not known. Putative receptor. In Caenorhabditis elegans, this protein is Probable G-protein coupled receptor npr-29.